Here is a 189-residue protein sequence, read N- to C-terminus: Protein GrpE (189 aa).

A compositionally biased stretch (basic residues) spans 1–12 (MDKKKHGSHAGA). The tract at residues 1–36 (MDKKKHGSHAGAHHTDEPAAETVAPAAEGAPAAADR) is disordered. Over residues 20–34 (AETVAPAAEGAPAAA) the composition is skewed to low complexity.

Belongs to the GrpE family. In terms of assembly, homodimer.

The protein localises to the cytoplasm. Participates actively in the response to hyperosmotic and heat shock by preventing the aggregation of stress-denatured proteins, in association with DnaK and GrpE. It is the nucleotide exchange factor for DnaK and may function as a thermosensor. Unfolded proteins bind initially to DnaJ; upon interaction with the DnaJ-bound protein, DnaK hydrolyzes its bound ATP, resulting in the formation of a stable complex. GrpE releases ADP from DnaK; ATP binding to DnaK triggers the release of the substrate protein, thus completing the reaction cycle. Several rounds of ATP-dependent interactions between DnaJ, DnaK and GrpE are required for fully efficient folding. In Geobacter metallireducens (strain ATCC 53774 / DSM 7210 / GS-15), this protein is Protein GrpE.